A 201-amino-acid chain; its full sequence is Protein tirC (201 aa).

In terms of domain architecture, TIR spans 52–186 (ERIKVFIVHG…YVWINYTEDL (135 aa)).

The sequence is that of Protein tirC (tirC) from Dictyostelium discoideum (Social amoeba).